We begin with the raw amino-acid sequence, 356 residues long: uncharacterized protein (356 aa).

An N-terminal signal peptide occupies residues 1–21; it reads MKLITAPCRALLALPFCYAFS.

This is an uncharacterized protein from Escherichia coli (strain K12).